The following is a 269-amino-acid chain: MTRFLNYQFNLILLAVSFFTRLPVPTAIDYSPQKLHQAGRYFPLVGWLLAALLSAFYCFMLPYLGREPTVCLLIIFSLMLTGAIHEDGLADTADGFWGGQSITRKLTIMKDSQIGTYGTCALICALLSKFILLSSLAADQHLLLALAIAYPLSRGLAISHVQHLAYARKNSDNSKSDSLAQPMQPRVLLWLLASSVPAVLWLPLSSAILVIVSACVLRFALKHWFKKHIDGYTGDCLGFAQQTQELLIYLLLIITLPKTVNEQTIGFLL.

Transmembrane regions (helical) follow at residues 8–28, 41–61, 70–90, 114–136, and 196–216; these read QFNL…PTAI, YFPL…CFML, VCLL…DGLA, IGTY…LSSL, and VPAV…SACV.

Belongs to the CobS family. Requires Mg(2+) as cofactor.

Its subcellular location is the cell inner membrane. The enzyme catalyses alpha-ribazole + adenosylcob(III)inamide-GDP = adenosylcob(III)alamin + GMP + H(+). The catalysed reaction is alpha-ribazole 5'-phosphate + adenosylcob(III)inamide-GDP = adenosylcob(III)alamin 5'-phosphate + GMP + H(+). It functions in the pathway cofactor biosynthesis; adenosylcobalamin biosynthesis; adenosylcobalamin from cob(II)yrinate a,c-diamide: step 7/7. In terms of biological role, joins adenosylcobinamide-GDP and alpha-ribazole to generate adenosylcobalamin (Ado-cobalamin). Also synthesizes adenosylcobalamin 5'-phosphate from adenosylcobinamide-GDP and alpha-ribazole 5'-phosphate. This Pseudoalteromonas atlantica (strain T6c / ATCC BAA-1087) protein is Adenosylcobinamide-GDP ribazoletransferase.